A 122-amino-acid chain; its full sequence is Protein POLR1D, isoform 2 (122 aa).

N-acetylmethionine is present on methionine 1. Residues 48 to 122 form a disordered region; that stretch reads INTIKNTLPS…DKYEKRSNRR (75 aa). The span at 57 to 83 shows a compositional bias: basic and acidic residues; sequence SHKEQDHEQKEGDKEPAKSQAQKEENP. Over residues 84–96 the composition is skewed to basic residues; the sequence is KKHRSHPYKHSFR. Serine 104 is subject to Phosphoserine. Residues 110-122 are compositionally biased toward basic and acidic residues; it reads SSQDKYEKRSNRR.

This chain is Protein POLR1D, isoform 2 (POLR1D), found in Homo sapiens (Human).